A 501-amino-acid polypeptide reads, in one-letter code: Glycerol kinase (501 aa).

An ADP-binding site is contributed by Thr-12. Residues Thr-12, Thr-13, and Ser-14 each contribute to the ATP site. Thr-12 lines the sn-glycerol 3-phosphate pocket. Arg-16 is an ADP binding site. The sn-glycerol 3-phosphate site is built by Arg-82, Glu-83, Tyr-134, and Asp-244. Glycerol is bound by residues Arg-82, Glu-83, Tyr-134, Asp-244, and Gln-245. Residues Thr-266 and Gly-310 each coordinate ADP. Thr-266, Gly-310, Gln-314, and Gly-411 together coordinate ATP. Residues Gly-411 and Asn-415 each contribute to the ADP site.

Belongs to the FGGY kinase family.

It catalyses the reaction glycerol + ATP = sn-glycerol 3-phosphate + ADP + H(+). Its pathway is polyol metabolism; glycerol degradation via glycerol kinase pathway; sn-glycerol 3-phosphate from glycerol: step 1/1. Its activity is regulated as follows. Inhibited by fructose 1,6-bisphosphate (FBP). Key enzyme in the regulation of glycerol uptake and metabolism. Catalyzes the phosphorylation of glycerol to yield sn-glycerol 3-phosphate. The polypeptide is Glycerol kinase (Methylorubrum populi (strain ATCC BAA-705 / NCIMB 13946 / BJ001) (Methylobacterium populi)).